We begin with the raw amino-acid sequence, 269 residues long: NAD kinase (269 aa).

Asp62 acts as the Proton acceptor in catalysis. NAD(+) is bound by residues 62 to 63, 130 to 131, Lys141, Arg158, Asp160, 171 to 176, Ala195, and Gln229; these read DG, NE, and TAYAMS.

This sequence belongs to the NAD kinase family. A divalent metal cation is required as a cofactor.

The protein localises to the cytoplasm. It catalyses the reaction NAD(+) + ATP = ADP + NADP(+) + H(+). Its function is as follows. Involved in the regulation of the intracellular balance of NAD and NADP, and is a key enzyme in the biosynthesis of NADP. Catalyzes specifically the phosphorylation on 2'-hydroxyl of the adenosine moiety of NAD to yield NADP. The protein is NAD kinase of Methanospirillum hungatei JF-1 (strain ATCC 27890 / DSM 864 / NBRC 100397 / JF-1).